A 163-amino-acid polypeptide reads, in one-letter code: Transcription elongation factor GreA (163 aa).

Positions N45–L65 form a coiled coil.

It belongs to the GreA/GreB family.

Necessary for efficient RNA polymerase transcription elongation past template-encoded arresting sites. The arresting sites in DNA have the property of trapping a certain fraction of elongating RNA polymerases that pass through, resulting in locked ternary complexes. Cleavage of the nascent transcript by cleavage factors such as GreA or GreB allows the resumption of elongation from the new 3'terminus. GreA releases sequences of 2 to 3 nucleotides. The polypeptide is Transcription elongation factor GreA (Helicobacter hepaticus (strain ATCC 51449 / 3B1)).